We begin with the raw amino-acid sequence, 346 residues long: Uroporphyrinogen decarboxylase (346 aa).

Substrate contacts are provided by residues 26-30, Asp-76, Tyr-153, Ser-208, and His-323; that span reads RQAGR.

Belongs to the uroporphyrinogen decarboxylase family. As to quaternary structure, homodimer.

The protein localises to the cytoplasm. It catalyses the reaction uroporphyrinogen III + 4 H(+) = coproporphyrinogen III + 4 CO2. The protein operates within porphyrin-containing compound metabolism; protoporphyrin-IX biosynthesis; coproporphyrinogen-III from 5-aminolevulinate: step 4/4. Its function is as follows. Catalyzes the decarboxylation of four acetate groups of uroporphyrinogen-III to yield coproporphyrinogen-III. This is Uroporphyrinogen decarboxylase from Prochlorococcus marinus (strain MIT 9215).